Consider the following 2588-residue polypeptide: Histone-lysine N-methyltransferase, H3 lysine-36 specific (2588 aa).

Phosphoserine occurs at positions 110 and 118. 2 disordered regions span residues 209–264 (GSEQ…LGDT) and 277–307 (LSFQ…TSQE). The segment covering 235–249 (EKQKNKQRSEVDGSN) has biased composition (basic and acidic residues). A compositionally biased stretch (polar residues) spans 298-307 (GTSSPSTSQE). Ser380 and Ser383 each carry phosphoserine. Residues 383–403 (SADEKEKPCAKSRVRKSSDNI) are disordered. A Glycyl lysine isopeptide (Lys-Gly) (interchain with G-Cter in SUMO2) cross-link involves residue Lys802. 3 disordered regions span residues 830–899 (ASYR…SDKR), 947–987 (ERKR…PGKE), and 1008–1133 (FDSK…PRLN). The segment covering 855–874 (GSSTPNSEKPGDSTQDSVHQ) has biased composition (polar residues). A compositionally biased stretch (low complexity) spans 881–895 (SALSGELSSSLSSLA). The segment covering 1008-1033 (FDSKAKQSDPDKNLEKEPSFENRKGP) has biased composition (basic and acidic residues). Residues 1054 to 1073 (PKKRWQRLNQRRPKPGKRAN) are compositionally biased toward basic residues. A Glycyl lysine isopeptide (Lys-Gly) (interchain with G-Cter in SUMO2) cross-link involves residue Lys1237. A disordered region spans residues 1279–1324 (ASPRPALESEELLVKTPGNYESKRQRKPTKKLLESNDLDPGFMPKK). Ser1408 carries the phosphoserine modification. 3 PHD-type zinc fingers span residues 1441-1487 (ENVC…CHTG), 1488-1544 (IHTC…CHAA), and 1605-1649 (VSWC…CKAG). The PWWP domain occupies 1654-1716 (YREIVWVKVG…QARVFPYMEG (63 aa)). In terms of domain architecture, AWS spans 1788–1838 (SEIPRCNCKATDENPCGIDSECINRMLLYECHPTVCPAGVRCQNQCFSKRQ). In terms of domain architecture, SET spans 1840-1957 (PDVEIFRTLQ…AGTELTFNYN (118 aa)). S-adenosyl-L-methionine-binding positions include 1850-1852 (RGW), 1892-1895 (TNFY), 1918-1919 (NH), Asn1963, and Lys1969. An inhibits enzyme activity in the absence of bound histone region spans residues 1958–1964 (LECLGNG). One can recognise a Post-SET domain in the interval 1964-1980 (GKTVCKCGAPNCSGFLG). Positions 1989–2010 (VTEEKSRKFKRKPHGKRRSQGE) are disordered. The segment covering 1995 to 2006 (RKFKRKPHGKRR) has biased composition (basic residues). A PHD-type 4; atypical zinc finger spans residues 2016 to 2063 (EDECFSCGDAGQLVSCKKPGCPKVYHADCLNLTKRPAGKWECPWHQCD). Disordered regions lie at residues 2105 to 2320 (PCGP…PPPE), 2333 to 2423 (KEKA…PSEH), 2447 to 2521 (YESA…WGLG), and 2560 to 2588 (RGQD…SEKK). Basic and acidic residues predominate over residues 2179–2196 (RPPERTDSSSHLLDRIRD). The span at 2201 to 2212 (GTKSQSLVSSQR) shows a compositional bias: polar residues. Residues 2213–2223 (PQDRPPAKEGP) are compositionally biased toward basic and acidic residues. Residues 2232–2249 (SPMTRPSSSPSVSSLPLE) are compositionally biased toward low complexity. Over residues 2250–2261 (RPLRMTDSRLDK) the composition is skewed to basic and acidic residues. At Ser2267 the chain carries Phosphoserine. The residue at position 2360 (Thr2360) is a Phosphothreonine. Ser2369 carries the post-translational modification Phosphoserine. A Glycyl lysine isopeptide (Lys-Gly) (interchain with G-Cter in SUMO2) cross-link involves residue Lys2509.

It belongs to the class V-like SAM-binding methyltransferase superfamily. Interacts with AR DNA- and ligand-binding domains. Interacts with the ligand-binding domains of RARA and THRA in the absence of ligand; in the presence of ligand the interaction is severely disrupted but some binding still occurs. Interacts with the ligand-binding domains of RXRA and ESRRA only in the presence of ligand. Interacts with ZNF496. Expressed in the embryo and the outer region of the uterine decidua at early post-implantation 5.5 dpc stage. Uniformly expressed in embryonic and extraembryonic tissues during gastrulation stage 7.5 dpc. Expressed differentially after stage 14.5 dpc with highest expression in proliferating cells. Enriched in the telencephalic region of the brain, spinal cord, intestinal crypt, tooth buds, thymus and salivary glands at stage 16.5 dpc. Also expressed in the ossification region of developing bones and in the periosteum.

The protein resides in the nucleus. The protein localises to the chromosome. The catalysed reaction is L-lysyl(36)-[histone H3] + 2 S-adenosyl-L-methionine = N(6),N(6)-dimethyl-L-lysyl(36)-[histone H3] + 2 S-adenosyl-L-homocysteine + 2 H(+). In terms of biological role, histone methyltransferase that dimethylates Lys-36 of histone H3 (H3K36me2). Transcriptional intermediary factor capable of negatively influencing transcription. May also positively influence transcription. Essential for early post-implantation development. The protein is Histone-lysine N-methyltransferase, H3 lysine-36 specific of Mus musculus (Mouse).